The primary structure comprises 439 residues: Xylose isomerase (439 aa).

Catalysis depends on residues His-101 and Asp-104. Positions 232, 268, 271, 296, 307, 309, and 339 each coordinate Mg(2+).

This sequence belongs to the xylose isomerase family. As to quaternary structure, homotetramer. The cofactor is Mg(2+).

It is found in the cytoplasm. The enzyme catalyses alpha-D-xylose = alpha-D-xylulofuranose. This Thermoanaerobacterium thermosaccharolyticum (strain ATCC 7956 / DSM 571 / NCIMB 9385 / NCA 3814 / NCTC 13789 / WDCM 00135 / 2032) (Clostridium thermosaccharolyticum) protein is Xylose isomerase (xylA).